The following is a 312-amino-acid chain: Homoserine O-succinyltransferase (312 aa).

Residue Cys142 is the Acyl-thioester intermediate of the active site. Substrate is bound by residues Lys163 and Ser192. His235 serves as the catalytic Proton acceptor. The active site involves Glu237. Arg249 is a substrate binding site.

Belongs to the MetA family.

Its subcellular location is the cytoplasm. It carries out the reaction L-homoserine + succinyl-CoA = O-succinyl-L-homoserine + CoA. Its pathway is amino-acid biosynthesis; L-methionine biosynthesis via de novo pathway; O-succinyl-L-homoserine from L-homoserine: step 1/1. In terms of biological role, transfers a succinyl group from succinyl-CoA to L-homoserine, forming succinyl-L-homoserine. The chain is Homoserine O-succinyltransferase from Alteromonas mediterranea (strain DSM 17117 / CIP 110805 / LMG 28347 / Deep ecotype).